The sequence spans 262 residues: MCGIFGYCNFLIEKTRGEIIDTLIEGLQALEYKEYDSSGISIQGDELESLNIYKQTGKISSLKEEIDLYNLNKNLPFISHCGIAHTRRATHGGLRRANCHPHNSDPSNEFVVVHNGVITNFANLKALLMAKGYVFKSDTDTECIPKLYKHIYDTSIELGYNLDFHVLTNLVLKELEGSYGLLCTSSHFPDEVVAARKGSPLVIGVKGKTDMDVNFVEVEYLDQEEDYLKLNTQTKSSGNVLAAAPVKYNTCLRKSPPFVHNT.

Catalysis depends on C2, which acts as the Nucleophile; for GATase activity. In terms of domain architecture, Glutamine amidotransferase type-2 spans 2–262 (CGIFGYCNFL…RKSPPFVHNT (261 aa)).

The enzyme catalyses D-fructose 6-phosphate + L-glutamine = D-glucosamine 6-phosphate + L-glutamate. Its pathway is nucleotide-sugar biosynthesis; UDP-N-acetyl-alpha-D-glucosamine biosynthesis; alpha-D-glucosamine 6-phosphate from D-fructose 6-phosphate: step 1/1. Functionally, involved in amino sugar synthesis (formation of chitin, supplies the amino sugars of asparagine-linked oligosaccharides of glycoproteins). The polypeptide is Putative glutamine--fructose-6-phosphate aminotransferase [isomerizing] (Saccharomyces cerevisiae (strain ATCC 204508 / S288c) (Baker's yeast)).